Here is a 158-residue protein sequence, read N- to C-terminus: MILFVGFLLMEIVMPQISRTALVPYSAEQMYQLVNDVQSYPQFLPGCTGSRILESTPGQMTAAVDVSKAGISKTFTTRNQLTSNQSILMNLVDGPFKKLIGGWKFTPLSQEACRIEFHLDFEFTNKLIELAFGRVFKELAANMVQAFTVRAKEVYSAR.

It belongs to the ribosome association toxin RatA family. As to quaternary structure, associates with 50S ribosomes.

In terms of biological role, toxic component of a type II toxin-antitoxin (TA) system. Binds to 50S ribosomal subunits, preventing them from associating with 30S subunits to form 70S ribosomes and reducing polysomes. It does not cause ribosomes to dissociate however. The antibiotic paromomycin blocks the anti-association activity of RatA. Overexpression results in inhibition of growth in liquid cultures, and in a decrease in protein translation. The other gene of this operon, ratB, is not the cognate antitoxin in this strain; in CFT073 however it does fulfill this function. Low level expression in a deletion mutant increases resistance to acidified sodium nitrate which causes nitrosative stress. This is Ribosome association toxin RatA (ratA) from Escherichia coli (strain K12).